A 4451-amino-acid polypeptide reads, in one-letter code: Gramicidin S synthase 2 (4451 aa).

The segment at 467–1044 is domain 1 (proline-activating); that stretch reads DKTIHQLFTE…IQEISNYING (578 aa). Carrier domains follow at residues 971–1046, 2006–2081, 3052–3127, and 4090–4165; these read VPTN…NGAK, APSS…ADGQ, RPRT…EETD, and APRN…THQE. Residues S1006, S2041, S3087, and S4125 each carry the O-(pantetheine 4'-phosphoryl)serine modification. A domain 2 (valine-activating) region spans residues 1521-2080; that stretch reads DHVAVGWKDQ…SALAQYIADG (560 aa). The domain 3 (ornithine-activating) stretch occupies residues 2538 to 3135; that stretch reads YATNKIFHEL…TDTEQYMAIQ (598 aa). The interval 3591–4173 is domain 4 (leucine-activating); sequence IQELFEEQVK…QESENNVHQP (583 aa).

The protein belongs to the ATP-dependent AMP-binding enzyme family. Large multienzyme complex of GrsA and GrsB. The cofactor is pantetheine 4'-phosphate.

It functions in the pathway antibiotic biosynthesis; gramicidin S biosynthesis. Its function is as follows. This protein is a multifunctional enzyme, able to activate and polymerize the amino acids Pro, Val, Orn and Leu. Activation sites for these AA consist of individual domains. In Aneurinibacillus migulanus (Bacillus migulanus), this protein is Gramicidin S synthase 2 (grsB).